Here is a 365-residue protein sequence, read N- to C-terminus: Deoxyguanosinetriphosphate triphosphohydrolase-like protein (365 aa).

In terms of domain architecture, HD spans 52-187; that stretch reads RLTHSIEVSQ…VDHADEIAYV (136 aa).

Belongs to the dGTPase family. Type 2 subfamily.

The polypeptide is Deoxyguanosinetriphosphate triphosphohydrolase-like protein (Wolinella succinogenes (strain ATCC 29543 / DSM 1740 / CCUG 13145 / JCM 31913 / LMG 7466 / NCTC 11488 / FDC 602W) (Vibrio succinogenes)).